We begin with the raw amino-acid sequence, 380 residues long: Chaperone protein DnaJ (380 aa).

The J domain maps to 4–69; that stretch reads DYYEILGVTR…QKRAAYDRFG (66 aa). The CR-type zinc-finger motif lies at 135–213; the sequence is GKTAQINIPS…CQGTRRVEKN (79 aa). Zn(2+) is bound by residues Cys148, Cys151, Cys165, Cys168, Cys187, Cys190, Cys201, and Cys204. 4 CXXCXGXG motif repeats span residues 148-155, 165-172, 187-194, and 201-208; these read CDSCEGSG, CGTCHGAG, CHACNGRG, and CPKCQGTR.

Belongs to the DnaJ family. As to quaternary structure, homodimer. The cofactor is Zn(2+).

Its subcellular location is the cytoplasm. Participates actively in the response to hyperosmotic and heat shock by preventing the aggregation of stress-denatured proteins and by disaggregating proteins, also in an autonomous, DnaK-independent fashion. Unfolded proteins bind initially to DnaJ; upon interaction with the DnaJ-bound protein, DnaK hydrolyzes its bound ATP, resulting in the formation of a stable complex. GrpE releases ADP from DnaK; ATP binding to DnaK triggers the release of the substrate protein, thus completing the reaction cycle. Several rounds of ATP-dependent interactions between DnaJ, DnaK and GrpE are required for fully efficient folding. Also involved, together with DnaK and GrpE, in the DNA replication of plasmids through activation of initiation proteins. This is Chaperone protein DnaJ from Bartonella quintana (strain Toulouse) (Rochalimaea quintana).